The chain runs to 106 residues: Nucleoid-associated protein DP1429 (106 aa).

This sequence belongs to the YbaB/EbfC family. As to quaternary structure, homodimer.

It localises to the cytoplasm. The protein localises to the nucleoid. In terms of biological role, binds to DNA and alters its conformation. May be involved in regulation of gene expression, nucleoid organization and DNA protection. The sequence is that of Nucleoid-associated protein DP1429 from Desulfotalea psychrophila (strain LSv54 / DSM 12343).